The sequence spans 156 residues: Class I hydrophobin B (156 aa).

Residues 1 to 18 (MQFTLSAVVLALAGFSAA) form the signal peptide. 4 disulfide bridges follow: cysteine 52–cysteine 130, cysteine 60–cysteine 124, cysteine 61–cysteine 101, and cysteine 131–cysteine 149.

This sequence belongs to the fungal hydrophobin family.

The protein localises to the secreted. The protein resides in the cell wall. Functionally, aerial growth, conidiation, and dispersal of filamentous fungi in the environment rely upon a capability of their secreting small amphipathic proteins called hydrophobins (HPBs) with low sequence identity. Class I can self-assemble into an outermost layer of rodlet bundles on aerial cell surfaces, conferring cellular hydrophobicity that supports fungal growth, development and dispersal; whereas Class II form highly ordered films at water-air interfaces through intermolecular interactions but contribute nothing to the rodlet structure. In P.expansum, hydrophobins contribute to germination, tolerance to cold stress and mycotoxins patulin and citrinin production. HfbA and HfbB are essential for fungal surface hydrophobicity. The protein is Class I hydrophobin B of Penicillium expansum (Blue mold rot fungus).